A 238-amino-acid polypeptide reads, in one-letter code: Purine nucleoside phosphorylase DeoD-type (238 aa).

Residue His-5 participates in a purine D-ribonucleoside binding. Phosphate is bound by residues Gly-21, Arg-25, Arg-44, and 88–91 (RIGT). Residues 180 to 182 (DME) and 204 to 205 (SD) contribute to the a purine D-ribonucleoside site. Asp-205 (proton donor) is an active-site residue.

The protein belongs to the PNP/UDP phosphorylase family. In terms of assembly, homohexamer; trimer of homodimers.

It catalyses the reaction a purine D-ribonucleoside + phosphate = a purine nucleobase + alpha-D-ribose 1-phosphate. The enzyme catalyses a purine 2'-deoxy-D-ribonucleoside + phosphate = a purine nucleobase + 2-deoxy-alpha-D-ribose 1-phosphate. Catalyzes the reversible phosphorolytic breakdown of the N-glycosidic bond in the beta-(deoxy)ribonucleoside molecules, with the formation of the corresponding free purine bases and pentose-1-phosphate. This is Purine nucleoside phosphorylase DeoD-type from Buchnera aphidicola subsp. Baizongia pistaciae (strain Bp).